Consider the following 246-residue polypeptide: 3-deoxy-manno-octulosonate cytidylyltransferase (246 aa).

It belongs to the KdsB family.

It is found in the cytoplasm. The catalysed reaction is 3-deoxy-alpha-D-manno-oct-2-ulosonate + CTP = CMP-3-deoxy-beta-D-manno-octulosonate + diphosphate. Its pathway is nucleotide-sugar biosynthesis; CMP-3-deoxy-D-manno-octulosonate biosynthesis; CMP-3-deoxy-D-manno-octulosonate from 3-deoxy-D-manno-octulosonate and CTP: step 1/1. It participates in bacterial outer membrane biogenesis; lipopolysaccharide biosynthesis. Activates KDO (a required 8-carbon sugar) for incorporation into bacterial lipopolysaccharide in Gram-negative bacteria. The protein is 3-deoxy-manno-octulosonate cytidylyltransferase of Bradyrhizobium sp. (strain ORS 278).